The chain runs to 294 residues: UPF0282 protein APE_0500.1 (294 aa).

Belongs to the UPF0282 family.

This Aeropyrum pernix (strain ATCC 700893 / DSM 11879 / JCM 9820 / NBRC 100138 / K1) protein is UPF0282 protein APE_0500.1.